We begin with the raw amino-acid sequence, 388 residues long: Succinate--CoA ligase [ADP-forming] subunit beta (388 aa).

The 236-residue stretch at 9-244 (KQLFAEYGLP…PSQDDAREAH (236 aa)) folds into the ATP-grasp domain. Residues K46, 53-55 (GRG), E99, T102, and E107 each bind ATP. Residues N199 and D213 each coordinate Mg(2+). Residues N264 and 321–323 (GIV) contribute to the substrate site.

This sequence belongs to the succinate/malate CoA ligase beta subunit family. Heterotetramer of two alpha and two beta subunits. The cofactor is Mg(2+).

The catalysed reaction is succinate + ATP + CoA = succinyl-CoA + ADP + phosphate. The enzyme catalyses GTP + succinate + CoA = succinyl-CoA + GDP + phosphate. It functions in the pathway carbohydrate metabolism; tricarboxylic acid cycle; succinate from succinyl-CoA (ligase route): step 1/1. Succinyl-CoA synthetase functions in the citric acid cycle (TCA), coupling the hydrolysis of succinyl-CoA to the synthesis of either ATP or GTP and thus represents the only step of substrate-level phosphorylation in the TCA. The beta subunit provides nucleotide specificity of the enzyme and binds the substrate succinate, while the binding sites for coenzyme A and phosphate are found in the alpha subunit. The protein is Succinate--CoA ligase [ADP-forming] subunit beta of Pseudomonas putida (strain ATCC 700007 / DSM 6899 / JCM 31910 / BCRC 17059 / LMG 24140 / F1).